The chain runs to 434 residues: Ribosomal protein uS12 methylthiotransferase RimO (434 aa).

The MTTase N-terminal domain occupies serine 6 to lysine 122. Positions 15, 51, 85, 146, 150, and 153 each coordinate [4Fe-4S] cluster. One can recognise a Radical SAM core domain in the interval leucine 132–alanine 361. One can recognise a TRAM domain in the interval glutamine 364–leucine 434.

This sequence belongs to the methylthiotransferase family. RimO subfamily. [4Fe-4S] cluster serves as cofactor.

It localises to the cytoplasm. It catalyses the reaction L-aspartate(89)-[ribosomal protein uS12]-hydrogen + (sulfur carrier)-SH + AH2 + 2 S-adenosyl-L-methionine = 3-methylsulfanyl-L-aspartate(89)-[ribosomal protein uS12]-hydrogen + (sulfur carrier)-H + 5'-deoxyadenosine + L-methionine + A + S-adenosyl-L-homocysteine + 2 H(+). Catalyzes the methylthiolation of an aspartic acid residue of ribosomal protein uS12. The chain is Ribosomal protein uS12 methylthiotransferase RimO from Chloroherpeton thalassium (strain ATCC 35110 / GB-78).